The primary structure comprises 372 residues: Transaldolase 2 (372 aa).

Catalysis depends on lysine 140, which acts as the Schiff-base intermediate with substrate.

The protein belongs to the transaldolase family. Type 2 subfamily.

Its subcellular location is the cytoplasm. It catalyses the reaction D-sedoheptulose 7-phosphate + D-glyceraldehyde 3-phosphate = D-erythrose 4-phosphate + beta-D-fructose 6-phosphate. It functions in the pathway carbohydrate degradation; pentose phosphate pathway; D-glyceraldehyde 3-phosphate and beta-D-fructose 6-phosphate from D-ribose 5-phosphate and D-xylulose 5-phosphate (non-oxidative stage): step 2/3. Functionally, transaldolase is important for the balance of metabolites in the pentose-phosphate pathway. The protein is Transaldolase 2 of Streptomyces coelicolor (strain ATCC BAA-471 / A3(2) / M145).